A 400-amino-acid chain; its full sequence is Acetate kinase (400 aa).

Asn10 serves as a coordination point for Mg(2+). Lys17 provides a ligand contact to ATP. Arg91 provides a ligand contact to substrate. Residue Asp150 is the Proton donor/acceptor of the active site. ATP is bound by residues 210-214 (HLGNG), 285-287 (DCR), and 333-337 (GIGEN). Position 387 (Glu387) interacts with Mg(2+).

The protein belongs to the acetokinase family. In terms of assembly, homodimer. The cofactor is Mg(2+). Mn(2+) is required as a cofactor.

The protein resides in the cytoplasm. The catalysed reaction is acetate + ATP = acetyl phosphate + ADP. It functions in the pathway metabolic intermediate biosynthesis; acetyl-CoA biosynthesis; acetyl-CoA from acetate: step 1/2. In terms of biological role, catalyzes the formation of acetyl phosphate from acetate and ATP. Can also catalyze the reverse reaction. The polypeptide is Acetate kinase (Pectobacterium carotovorum subsp. carotovorum (strain PC1)).